The following is a 620-amino-acid chain: 1-deoxy-D-xylulose-5-phosphate synthase (620 aa).

Thiamine diphosphate-binding positions include His-75 and 116–118; that span reads AHS. Asp-147 is a Mg(2+) binding site. Thiamine diphosphate is bound by residues 148-149, Asn-177, Tyr-284, and Glu-366; that span reads GA. Position 177 (Asn-177) interacts with Mg(2+).

This sequence belongs to the transketolase family. DXPS subfamily. Homodimer. It depends on Mg(2+) as a cofactor. Thiamine diphosphate serves as cofactor.

The catalysed reaction is D-glyceraldehyde 3-phosphate + pyruvate + H(+) = 1-deoxy-D-xylulose 5-phosphate + CO2. The protein operates within metabolic intermediate biosynthesis; 1-deoxy-D-xylulose 5-phosphate biosynthesis; 1-deoxy-D-xylulose 5-phosphate from D-glyceraldehyde 3-phosphate and pyruvate: step 1/1. In terms of biological role, catalyzes the acyloin condensation reaction between C atoms 2 and 3 of pyruvate and glyceraldehyde 3-phosphate to yield 1-deoxy-D-xylulose-5-phosphate (DXP). The polypeptide is 1-deoxy-D-xylulose-5-phosphate synthase (Bordetella avium (strain 197N)).